The sequence spans 314 residues: DNA-directed RNA polymerase subunit alpha (314 aa).

The alpha N-terminal domain (alpha-NTD) stretch occupies residues 1-228 (MIEIEKPKIE…EHLNIFVGLT (228 aa)). The segment at 246 to 314 (EKVLEMTIEE…ELGLGLRKDD (69 aa)) is alpha C-terminal domain (alpha-CTD).

This sequence belongs to the RNA polymerase alpha chain family. As to quaternary structure, homodimer. The RNAP catalytic core consists of 2 alpha, 1 beta, 1 beta' and 1 omega subunit. When a sigma factor is associated with the core the holoenzyme is formed, which can initiate transcription.

It catalyses the reaction RNA(n) + a ribonucleoside 5'-triphosphate = RNA(n+1) + diphosphate. Functionally, DNA-dependent RNA polymerase catalyzes the transcription of DNA into RNA using the four ribonucleoside triphosphates as substrates. The chain is DNA-directed RNA polymerase subunit alpha from Bacillus velezensis (strain DSM 23117 / BGSC 10A6 / LMG 26770 / FZB42) (Bacillus amyloliquefaciens subsp. plantarum).